We begin with the raw amino-acid sequence, 447 residues long: Glucose-6-phosphate isomerase (447 aa).

Glu-288 functions as the Proton donor in the catalytic mechanism. Catalysis depends on residues His-309 and Lys-423.

It belongs to the GPI family.

The protein localises to the cytoplasm. It catalyses the reaction alpha-D-glucose 6-phosphate = beta-D-fructose 6-phosphate. It participates in carbohydrate biosynthesis; gluconeogenesis. Its pathway is carbohydrate degradation; glycolysis; D-glyceraldehyde 3-phosphate and glycerone phosphate from D-glucose: step 2/4. In terms of biological role, catalyzes the reversible isomerization of glucose-6-phosphate to fructose-6-phosphate. In Lactobacillus gasseri (strain ATCC 33323 / DSM 20243 / BCRC 14619 / CIP 102991 / JCM 1131 / KCTC 3163 / NCIMB 11718 / NCTC 13722 / AM63), this protein is Glucose-6-phosphate isomerase.